Reading from the N-terminus, the 232-residue chain is 7-cyano-7-deazaguanine synthase (232 aa).

Position 8–18 (8–18 (FSGGQDSTTCL)) interacts with ATP. Residues C187, C196, C199, and C202 each coordinate Zn(2+).

Belongs to the QueC family. The cofactor is Zn(2+).

The enzyme catalyses 7-carboxy-7-deazaguanine + NH4(+) + ATP = 7-cyano-7-deazaguanine + ADP + phosphate + H2O + H(+). It participates in purine metabolism; 7-cyano-7-deazaguanine biosynthesis. Its function is as follows. Catalyzes the ATP-dependent conversion of 7-carboxy-7-deazaguanine (CDG) to 7-cyano-7-deazaguanine (preQ(0)). The sequence is that of 7-cyano-7-deazaguanine synthase from Vibrio vulnificus (strain YJ016).